Reading from the N-terminus, the 460-residue chain is Sorting nexin-4 (460 aa).

A compositionally biased stretch (polar residues) spans 1–16 (MTATEQQQDDFSNVSW). The segment at 1–53 (MTATEQQQDDFSNVSWSEHVHDQQTRSVPDAEEPGHDMNAPGTGLERDAPSLG) is disordered. The 123-residue stretch at 56 to 178 (KLECTVDTPI…TFLESPDWNA (123 aa)) folds into the PX domain. Coiled-coil stretches lie at residues 238-266 (EKVIARVARREADLEVDLRDLAEQFQKLI), 306-337 (RDMQAYSIALKNLLKAREQKQLDYEQLTEYLN), and 374-403 (QARRERTRKLELRVEELTHEVESARKTSDM).

This sequence belongs to the sorting nexin family. Forms a complex with ATG20 and ATG17.

Its subcellular location is the cytoplasm. It is found in the membrane. The protein localises to the endosome membrane. Functionally, sorting nexin involved in the separation or division of vacuoles throughout the entire life cycle of the cells. Involved in retrieval of late-Golgi SNAREs from post-Golgi endosomes to the trans-Golgi network, for cytoplasm to vacuole transport (Cvt), and autophagy of large cargos including mitophagy, pexophagy and glycophagy. Autophagy is required for proper vegetative growth, asexual/sexual reproduction, and full virulence. Autophagy is particularly involved in the biosynthesis of deoxynivalenol (DON), an important virulence determinant. In Gibberella zeae (strain ATCC MYA-4620 / CBS 123657 / FGSC 9075 / NRRL 31084 / PH-1) (Wheat head blight fungus), this protein is Sorting nexin-4.